We begin with the raw amino-acid sequence, 202 residues long: Dephospho-CoA kinase (202 aa).

Positions 3-202 (IFGLTGGIGS…ISHRSKYLSC (200 aa)) constitute a DPCK domain. 11-16 (GSGKSL) lines the ATP pocket.

It belongs to the CoaE family.

The protein resides in the cytoplasm. The enzyme catalyses 3'-dephospho-CoA + ATP = ADP + CoA + H(+). The protein operates within cofactor biosynthesis; coenzyme A biosynthesis; CoA from (R)-pantothenate: step 5/5. Catalyzes the phosphorylation of the 3'-hydroxyl group of dephosphocoenzyme A to form coenzyme A. This chain is Dephospho-CoA kinase, found in Ehrlichia chaffeensis (strain ATCC CRL-10679 / Arkansas).